The primary structure comprises 558 residues: DEAD-box ATP-dependent RNA helicase 49 (558 aa).

The short motif at 16 to 44 (FSELKPPLSEDIIEALDRSGFEVCTPVQA) is the Q motif element. The Helicase ATP-binding domain maps to 47-226 (IPFLCSHKDV…KAGLRNAMEV (180 aa)). An ATP-binding site is contributed by 60 to 67 (AATGSGKT). Residues 174 to 177 (DEAD) carry the DEAD box motif. One can recognise a Helicase C-terminal domain in the interval 255 to 402 (QLVHLLIENK…ERKCSENASD (148 aa)). The tract at residues 506-558 (KDKLQQEKRGKRKKSSKEAVDDSNKASRKRKLTGRQRQTIQTAQDEEEMNLRL) is disordered. The segment covering 521–530 (SKEAVDDSNK) has biased composition (basic and acidic residues). Residues 549–558 (QDEEEMNLRL) show a composition bias toward acidic residues.

Belongs to the DEAD box helicase family. DDX55/SPB4 subfamily.

It catalyses the reaction ATP + H2O = ADP + phosphate + H(+). The sequence is that of DEAD-box ATP-dependent RNA helicase 49 (RH49) from Arabidopsis thaliana (Mouse-ear cress).